The chain runs to 87 residues: U3-theraphotoxin-Cg1c (87 aa).

The signal sequence occupies residues 1-23 (MRTFTLIAILTCAVLVIFHVSAA). Positions 24–51 (EELEAQDVIQPEDIFTGVATLEEDRIFE) are excised as a propeptide. 3 cysteine pairs are disulfide-bonded: Cys52–Cys65, Cys56–Cys79, and Cys73–Cys84.

It belongs to the neurotoxin 12 (Hwtx-2) family. 03 (juruin) subfamily. Expressed by the venom gland.

It is found in the secreted. Its function is as follows. Probable ion channel inhibitor. This chain is U3-theraphotoxin-Cg1c, found in Chilobrachys guangxiensis (Chinese earth tiger tarantula).